Consider the following 99-residue polypeptide: Goannatyrotoxin-Vere1 (99 aa).

The signal sequence occupies residues 1–28 (MIASMKPWPLVMVAALCILFCLGTLVDA). Position 64 is a tyrosine amide (Y64). Positions 68 to 99 (SSPETLMSELIFGENSNSDHSSRSRFDDSYMW) are cleaved as a propeptide — C-terminal extension.

This sequence belongs to the NPY family. In terms of tissue distribution, expressed by the mandibular venom gland.

Its subcellular location is the secreted. Shows a potent unique triphasic action, rapid biphasic hypertension followed by prolonged hypotension. This is Goannatyrotoxin-Vere1 from Varanus eremius (Rusty desert monitor).